Reading from the N-terminus, the 599-residue chain is Sulfite reductase [NADPH] flavoprotein alpha-component (599 aa).

A Flavodoxin-like domain is found at 64–202 (VTLISASQTG…AASEWRARVV (139 aa)). Residues 70 to 75 (SQTGNA), 117 to 120 (STQG), and 153 to 162 (LGDTSYEFFC) contribute to the FMN site. The FAD-binding FR-type domain maps to 234–448 (DAPLAATLSV…IEHNDNFRLP (215 aa)). Residues Thr322, Ala356, 386 to 389 (RLYS), 404 to 406 (TVG), Tyr410, and 419 to 422 (GGAS) each bind FAD. NADP(+) is bound by residues 519–520 (SR), 525–529 (KIYVQ), and Asp561. Tyr599 is an FAD binding site.

This sequence belongs to the NADPH-dependent sulphite reductase flavoprotein subunit CysJ family. It in the N-terminal section; belongs to the flavodoxin family. In the C-terminal section; belongs to the flavoprotein pyridine nucleotide cytochrome reductase family. As to quaternary structure, alpha(8)-beta(8). The alpha component is a flavoprotein, the beta component is a hemoprotein. The cofactor is FAD. Requires FMN as cofactor.

It catalyses the reaction hydrogen sulfide + 3 NADP(+) + 3 H2O = sulfite + 3 NADPH + 4 H(+). It functions in the pathway sulfur metabolism; hydrogen sulfide biosynthesis; hydrogen sulfide from sulfite (NADPH route): step 1/1. Component of the sulfite reductase complex that catalyzes the 6-electron reduction of sulfite to sulfide. This is one of several activities required for the biosynthesis of L-cysteine from sulfate. The flavoprotein component catalyzes the electron flow from NADPH -&gt; FAD -&gt; FMN to the hemoprotein component. The sequence is that of Sulfite reductase [NADPH] flavoprotein alpha-component from Salmonella paratyphi B (strain ATCC BAA-1250 / SPB7).